A 938-amino-acid polypeptide reads, in one-letter code: Chaperone protein ClpD1, chloroplastic (938 aa).

A chloroplast-targeting transit peptide spans methionine 1–lysine 83. Repeat regions lie at residues alanine 84–alanine 145 and phenylalanine 159–glutamate 224. The 141-residue stretch at alanine 84–glutamate 224 folds into the Clp R domain. A disordered region spans residues glycine 234–lysine 255. The segment at leucine 266 to glutamate 519 is i. ATP contacts are provided by residues glycine 311–threonine 318 and glycine 660–threonine 667. An II region spans residues valine 586–serine 777.

Belongs to the ClpA/ClpB family. ClpD subfamily. In terms of tissue distribution, expressed in stems, culms and leaves.

Its subcellular location is the plastid. The protein localises to the chloroplast. Its function is as follows. Molecular chaperone that may function in heat stress response. May interact with a ClpP-like protease involved in degradation of denatured proteins in the chloroplast. Chaperone involved in response to abiotic stresses. Plays a positive role during dehydration and salt stress. In Oryza sativa subsp. japonica (Rice), this protein is Chaperone protein ClpD1, chloroplastic.